Reading from the N-terminus, the 302-residue chain is Methionyl-tRNA formyltransferase (302 aa).

109 to 112 (SILP) serves as a coordination point for (6S)-5,6,7,8-tetrahydrofolate.

Belongs to the Fmt family.

It carries out the reaction L-methionyl-tRNA(fMet) + (6R)-10-formyltetrahydrofolate = N-formyl-L-methionyl-tRNA(fMet) + (6S)-5,6,7,8-tetrahydrofolate + H(+). Attaches a formyl group to the free amino group of methionyl-tRNA(fMet). The formyl group appears to play a dual role in the initiator identity of N-formylmethionyl-tRNA by promoting its recognition by IF2 and preventing the misappropriation of this tRNA by the elongation apparatus. This chain is Methionyl-tRNA formyltransferase, found in Campylobacter hominis (strain ATCC BAA-381 / DSM 21671 / CCUG 45161 / LMG 19568 / NCTC 13146 / CH001A).